A 103-amino-acid chain; its full sequence is Pyrimidine/purine nucleoside phosphorylase (103 aa).

Belongs to the nucleoside phosphorylase PpnP family.

It catalyses the reaction a purine D-ribonucleoside + phosphate = a purine nucleobase + alpha-D-ribose 1-phosphate. The enzyme catalyses adenosine + phosphate = alpha-D-ribose 1-phosphate + adenine. It carries out the reaction cytidine + phosphate = cytosine + alpha-D-ribose 1-phosphate. The catalysed reaction is guanosine + phosphate = alpha-D-ribose 1-phosphate + guanine. It catalyses the reaction inosine + phosphate = alpha-D-ribose 1-phosphate + hypoxanthine. The enzyme catalyses thymidine + phosphate = 2-deoxy-alpha-D-ribose 1-phosphate + thymine. It carries out the reaction uridine + phosphate = alpha-D-ribose 1-phosphate + uracil. The catalysed reaction is xanthosine + phosphate = alpha-D-ribose 1-phosphate + xanthine. Its function is as follows. Catalyzes the phosphorolysis of diverse nucleosides, yielding D-ribose 1-phosphate and the respective free bases. Can use uridine, adenosine, guanosine, cytidine, thymidine, inosine and xanthosine as substrates. Also catalyzes the reverse reactions. This is Pyrimidine/purine nucleoside phosphorylase from Laribacter hongkongensis (strain HLHK9).